The primary structure comprises 523 residues: MIKQALLSVSDKTGIVEFARELNALGVTLLSTGGTAKLLADSGLPVTEVADYTGFPEMLDGRVKTLHPKVHGGILARRDLPEHMAALAEHDIPTIDLLVVNLYPFQQTVAKDDCTLPDAIENIDIGGPTMLRSAAKNHRDVTVIVDPVDYAVVLDEMRANGNKVGYDTNFRLATKVFAHTAQYDGAITNYLTSLGADKSHQARSAYPQTLNLAFEKVQEMRYGENPHQSAAFYRDLKAVDGALANYVQLQGKELSYNNIADADAAWECVKSFAVTTPACVIIKHANPCGVAVGANALEAYDKAFKTDSTSAFGGIIAFNVELDETAAQAVAKQFVEVLIAPSFSAAARAVFASKQNVRLLEIPLGKGINQYDLKRVGGGLLVQSPDAKNVQPTELRVVTRRHPTPKEMDDLMFAWRVAKFVKSNAIVFCGGGMTLGVGAGQMSRVDSARIASIKAQNAGLTLAGSAVASDAFFPFRDGLDVVVDAGATCVIQPGGSMRDDEVIAAADDRGIAMVLTGTRHFRH.

Residues 1–145 (MIKQALLSVS…KNHRDVTVIV (145 aa)) form the MGS-like domain.

Belongs to the PurH family.

It catalyses the reaction (6R)-10-formyltetrahydrofolate + 5-amino-1-(5-phospho-beta-D-ribosyl)imidazole-4-carboxamide = 5-formamido-1-(5-phospho-D-ribosyl)imidazole-4-carboxamide + (6S)-5,6,7,8-tetrahydrofolate. The enzyme catalyses IMP + H2O = 5-formamido-1-(5-phospho-D-ribosyl)imidazole-4-carboxamide. The protein operates within purine metabolism; IMP biosynthesis via de novo pathway; 5-formamido-1-(5-phospho-D-ribosyl)imidazole-4-carboxamide from 5-amino-1-(5-phospho-D-ribosyl)imidazole-4-carboxamide (10-formyl THF route): step 1/1. Its pathway is purine metabolism; IMP biosynthesis via de novo pathway; IMP from 5-formamido-1-(5-phospho-D-ribosyl)imidazole-4-carboxamide: step 1/1. This chain is Bifunctional purine biosynthesis protein PurH, found in Cupriavidus pinatubonensis (strain JMP 134 / LMG 1197) (Cupriavidus necator (strain JMP 134)).